An 87-amino-acid polypeptide reads, in one-letter code: Small ribosomal subunit protein bS20 (87 aa).

The interval Met-1 to His-20 is disordered. Over residues Ala-7–Ala-19 the composition is skewed to basic residues.

It belongs to the bacterial ribosomal protein bS20 family.

Its function is as follows. Binds directly to 16S ribosomal RNA. In Chromobacterium violaceum (strain ATCC 12472 / DSM 30191 / JCM 1249 / CCUG 213 / NBRC 12614 / NCIMB 9131 / NCTC 9757 / MK), this protein is Small ribosomal subunit protein bS20.